Consider the following 84-residue polypeptide: Sec-independent protein translocase protein TatA (84 aa).

The helical transmembrane segment at Met1 to Gly21 threads the bilayer. Residues Lys40–Ser84 are disordered. Residues Asp69–Ser84 are compositionally biased toward basic and acidic residues.

The protein belongs to the TatA/E family. As to quaternary structure, the Tat system comprises two distinct complexes: a TatABC complex, containing multiple copies of TatA, TatB and TatC subunits, and a separate TatA complex, containing only TatA subunits. Substrates initially bind to the TatABC complex, which probably triggers association of the separate TatA complex to form the active translocon.

Its subcellular location is the cell inner membrane. Its function is as follows. Part of the twin-arginine translocation (Tat) system that transports large folded proteins containing a characteristic twin-arginine motif in their signal peptide across membranes. TatA could form the protein-conducting channel of the Tat system. The polypeptide is Sec-independent protein translocase protein TatA (Polaromonas naphthalenivorans (strain CJ2)).